We begin with the raw amino-acid sequence, 85 residues long: Small ribosomal subunit protein uS15c (85 aa).

The protein belongs to the universal ribosomal protein uS15 family. In terms of assembly, part of the 30S ribosomal subunit.

It localises to the plastid. The protein resides in the chloroplast. In Chaetosphaeridium globosum (Charophycean green alga), this protein is Small ribosomal subunit protein uS15c (rps15).